The sequence spans 170 residues: Inosine/xanthosine triphosphatase (170 aa).

It belongs to the YjjX NTPase family. Homodimer. Mg(2+) serves as cofactor. Mn(2+) is required as a cofactor.

The enzyme catalyses XTP + H2O = XDP + phosphate + H(+). It catalyses the reaction ITP + H2O = IDP + phosphate + H(+). Functionally, phosphatase that hydrolyzes non-canonical purine nucleotides such as XTP and ITP to their respective diphosphate derivatives. Probably excludes non-canonical purines from DNA/RNA precursor pool, thus preventing their incorporation into DNA/RNA and avoiding chromosomal lesions. The chain is Inosine/xanthosine triphosphatase from Aliivibrio fischeri (strain MJ11) (Vibrio fischeri).